A 571-amino-acid polypeptide reads, in one-letter code: Proline--tRNA ligase (571 aa).

It belongs to the class-II aminoacyl-tRNA synthetase family. ProS type 1 subfamily. Homodimer.

It is found in the cytoplasm. It catalyses the reaction tRNA(Pro) + L-proline + ATP = L-prolyl-tRNA(Pro) + AMP + diphosphate. In terms of biological role, catalyzes the attachment of proline to tRNA(Pro) in a two-step reaction: proline is first activated by ATP to form Pro-AMP and then transferred to the acceptor end of tRNA(Pro). As ProRS can inadvertently accommodate and process non-cognate amino acids such as alanine and cysteine, to avoid such errors it has two additional distinct editing activities against alanine. One activity is designated as 'pretransfer' editing and involves the tRNA(Pro)-independent hydrolysis of activated Ala-AMP. The other activity is designated 'posttransfer' editing and involves deacylation of mischarged Ala-tRNA(Pro). The misacylated Cys-tRNA(Pro) is not edited by ProRS. This Pseudomonas syringae pv. tomato (strain ATCC BAA-871 / DC3000) protein is Proline--tRNA ligase.